The primary structure comprises 267 residues: MVSVSTCFSALRDRAQCALIPFITAGDPSLEITAKALQVLDQQGADLIELGVPYSDPLADGPTIQAAATRALQKGTRLDAVLEMISHVAPNLRSPLILFTYYNPIFHRGVEPFLQQVAQAGVQGLVVPDLPLEEADTVLTQAAAVGIELTLLVAPTTPRSRIAAIAERSQGFIYLVSTTGVTGMRSKVEGRVHELLLELQQVTDKPIGVGFGISQPEHARQVMEWGADAAIVGSAFVKRLAEGTPEQGLAAIADFCRSLKTALTPVD.

Residues E49 and D60 each act as proton acceptor in the active site.

It belongs to the TrpA family. In terms of assembly, tetramer of two alpha and two beta chains.

It carries out the reaction (1S,2R)-1-C-(indol-3-yl)glycerol 3-phosphate + L-serine = D-glyceraldehyde 3-phosphate + L-tryptophan + H2O. It functions in the pathway amino-acid biosynthesis; L-tryptophan biosynthesis; L-tryptophan from chorismate: step 5/5. The alpha subunit is responsible for the aldol cleavage of indoleglycerol phosphate to indole and glyceraldehyde 3-phosphate. In Cyanothece sp. (strain PCC 7425 / ATCC 29141), this protein is Tryptophan synthase alpha chain.